The primary structure comprises 81 residues: Sulfur carrier protein TusA (81 aa).

Cysteine 19 functions as the Cysteine persulfide intermediate in the catalytic mechanism.

This sequence belongs to the sulfur carrier protein TusA family. In terms of assembly, interacts with IscS.

The protein resides in the cytoplasm. It functions in the pathway tRNA modification. Its function is as follows. Sulfur carrier protein involved in sulfur trafficking in the cell. Part of a sulfur-relay system required for 2-thiolation during synthesis of 2-thiouridine of the modified wobble base 5-methylaminomethyl-2-thiouridine (mnm(5)s(2)U) in tRNA. Interacts with IscS and stimulates its cysteine desulfurase activity. Accepts an activated sulfur from IscS, which is then transferred to TusD, and thus determines the direction of sulfur flow from IscS to 2-thiouridine formation. Also appears to be involved in sulfur transfer for the biosynthesis of molybdopterin. The protein is Sulfur carrier protein TusA of Enterobacter sp. (strain 638).